The following is a 317-amino-acid chain: Melanocyte-stimulating hormone receptor (317 aa).

Topologically, residues 1–37 (MPVQGSQRRLLGSLNSTPTATPRLGLAANQTGARCLE) are extracellular. Asparagine 29 is a glycosylation site (N-linked (GlcNAc...) asparagine). The chain crosses the membrane as a helical span at residues 38-63 (VSIPDGLFLSLGLVSLVENVLVVVAI). Residues 64 to 72 (ARNRNLHSP) are Cytoplasmic-facing. A helical membrane pass occupies residues 73-93 (MYCFICCLALSDLLVSGSNML). The Extracellular portion of the chain corresponds to 94–118 (DTAVILLLEAGALAARAAVVQQLDN). A helical transmembrane segment spans residues 119-140 (VIDVITCSSMLSSLCFLGAIAV). Residues 141–163 (DRYISIFYALRYHSIVTLRRARR) are Cytoplasmic-facing. A helical membrane pass occupies residues 164-183 (VVAAIWVASILFSTLFIAYC). Over 184–191 (DHAAVLLC) the chain is Extracellular. Residues 192–211 (LVVFFLAMLVLMAVLYVHML) form a helical membrane-spanning segment. At 212 to 240 (ARACQHAQGIAQLHKRQRPAHQGVGLKGA) the chain is on the cytoplasmic side. A helical membrane pass occupies residues 241-266 (ATLTILLGIFFLCWGPFFLHLTLIVL). Residues 267-279 (CPQHPTCSCIFKN) are Extracellular-facing. A helical membrane pass occupies residues 280–300 (FNLFLTLIICNAIIDPLIYAF). At 301-317 (RSQELRRTLKKVLLCSW) the chain is on the cytoplasmic side. The S-palmitoyl cysteine moiety is linked to residue cysteine 315.

This sequence belongs to the G-protein coupled receptor 1 family. As to quaternary structure, interacts with MGRN1, but does not undergo MGRN1-mediated ubiquitination; this interaction competes with GNAS-binding and thus inhibits agonist-induced cAMP production. Interacts with OPN3; the interaction results in a decrease in MC1R-mediated cAMP signaling and ultimately a decrease in melanin production in melanocytes.

The protein localises to the cell membrane. Functionally, receptor for MSH (alpha, beta and gamma) and ACTH. The activity of this receptor is mediated by G proteins which activate adenylate cyclase. Mediates melanogenesis, the production of eumelanin (black/brown) and phaeomelanin (red/yellow), via regulation of cAMP signaling in melanocytes. The chain is Melanocyte-stimulating hormone receptor (MC1R) from Trachypithecus francoisi (Francois' leaf monkey).